The chain runs to 518 residues: Phenylacetate 2-hydroxylase (518 aa).

Heme is bound at residue Cys-437.

This sequence belongs to the cytochrome P450 family.

It carries out the reaction 2-phenylacetate + reduced [NADPH--hemoprotein reductase] + O2 = (2-hydroxyphenyl)acetate + oxidized [NADPH--hemoprotein reductase] + H2O + H(+). The protein operates within aromatic compound metabolism; phenylacetate degradation. Functionally, catalyzes the hydroxylation of phenylacetate to 2-hydroxyphenylacetate in the homogentisate pathway. The homogentisate pathway is used to catabolize phenylacetate and use it as a carbon source. Can also catalyze the hydroxylation of 3-hydroxyphenylacetate to 2,5-dihydroxyphenylacetate (homogentisate) at low efficiency. This is Phenylacetate 2-hydroxylase (phacA) from Emericella nidulans (Aspergillus nidulans).